Consider the following 422-residue polypeptide: Probable tRNA pseudouridine synthase D 2 (422 aa).

Aspartate 89 (nucleophile) is an active-site residue. One can recognise a TRUD domain in the interval 160–371 (GAPNYFDSQR…IYSERKILSI (212 aa)).

Belongs to the pseudouridine synthase TruD family.

It carries out the reaction uridine(13) in tRNA = pseudouridine(13) in tRNA. In terms of biological role, could be responsible for synthesis of pseudouridine from uracil-13 in transfer RNAs. This is Probable tRNA pseudouridine synthase D 2 from Methanocaldococcus jannaschii (strain ATCC 43067 / DSM 2661 / JAL-1 / JCM 10045 / NBRC 100440) (Methanococcus jannaschii).